A 140-amino-acid polypeptide reads, in one-letter code: UPF0179 protein Msp_0996 (140 aa).

Belongs to the UPF0179 family.

In Methanosphaera stadtmanae (strain ATCC 43021 / DSM 3091 / JCM 11832 / MCB-3), this protein is UPF0179 protein Msp_0996.